The chain runs to 312 residues: Ribosomal RNA small subunit methyltransferase H (312 aa).

Residues 33-35 (AGH), D52, F79, D100, and Q107 contribute to the S-adenosyl-L-methionine site.

The protein belongs to the methyltransferase superfamily. RsmH family.

Its subcellular location is the cytoplasm. The enzyme catalyses cytidine(1402) in 16S rRNA + S-adenosyl-L-methionine = N(4)-methylcytidine(1402) in 16S rRNA + S-adenosyl-L-homocysteine + H(+). Its function is as follows. Specifically methylates the N4 position of cytidine in position 1402 (C1402) of 16S rRNA. This chain is Ribosomal RNA small subunit methyltransferase H, found in Finegoldia magna (strain ATCC 29328 / DSM 20472 / WAL 2508) (Peptostreptococcus magnus).